We begin with the raw amino-acid sequence, 90 residues long: Carboxysome shell vertex protein CsoS4A (90 aa).

Positions 1-78 (MKIYKVDKTL…SDLTIVGIID (78 aa)) constitute a BMV domain.

It belongs to the CcmL/EutN family. CsoS4 subfamily. In terms of assembly, homopentamer.

It is found in the carboxysome. In terms of biological role, probably forms vertices in the carboxysome, a polyhedral inclusion where RuBisCO (ribulose bisphosphate carboxylase, cbbL-cbbS) is sequestered. Has been modeled to induce curvature upon insertion into an otherwise flat hexagonal layer of major carboxysome subunits. The sequence is that of Carboxysome shell vertex protein CsoS4A from Hydrogenovibrio crunogenus (strain DSM 25203 / XCL-2) (Thiomicrospira crunogena).